The primary structure comprises 376 residues: Probable ATP-dependent RNA helicase YfmL (376 aa).

A Helicase ATP-binding domain is found at 35 to 205; it reads AQLIMDGKDV…RELAQEPEVL (171 aa). Position 48–55 (48–55) interacts with ATP; the sequence is SPTGTGKT. Positions 153 to 156 match the DEAD box motif; it reads DETD. Residues 231 to 374 form the Helicase C-terminal domain; it reads KLLQKLSRLE…EAVYAGGKLK (144 aa).

It belongs to the DEAD box helicase family.

The enzyme catalyses ATP + H2O = ADP + phosphate + H(+). A probable DEAD-box RNA helicase that plays a role in ribosomal 50S subunit assembly. May be a non-specific RNA helicase. This chain is Probable ATP-dependent RNA helicase YfmL (yfmL), found in Bacillus subtilis (strain 168).